We begin with the raw amino-acid sequence, 299 residues long: ATP phosphoribosyltransferase (299 aa).

This sequence belongs to the ATP phosphoribosyltransferase family. Long subfamily. As to quaternary structure, equilibrium between an active dimeric form, an inactive hexameric form and higher aggregates. Interconversion between the various forms is largely reversible and is influenced by the natural substrates and inhibitors of the enzyme. Requires Mg(2+) as cofactor.

It is found in the cytoplasm. The enzyme catalyses 1-(5-phospho-beta-D-ribosyl)-ATP + diphosphate = 5-phospho-alpha-D-ribose 1-diphosphate + ATP. It functions in the pathway amino-acid biosynthesis; L-histidine biosynthesis; L-histidine from 5-phospho-alpha-D-ribose 1-diphosphate: step 1/9. Feedback inhibited by histidine. In terms of biological role, catalyzes the condensation of ATP and 5-phosphoribose 1-diphosphate to form N'-(5'-phosphoribosyl)-ATP (PR-ATP). Has a crucial role in the pathway because the rate of histidine biosynthesis seems to be controlled primarily by regulation of HisG enzymatic activity. This chain is ATP phosphoribosyltransferase, found in Escherichia coli O157:H7.